The following is a 525-amino-acid chain: GMP synthase [glutamine-hydrolyzing] (525 aa).

Residues 9 to 207 enclose the Glutamine amidotransferase type-1 domain; the sequence is RILILDFGSQ…VHEICGCPAD (199 aa). C86 serves as the catalytic Nucleophile. Residues H181 and E183 contribute to the active site. The 193-residue stretch at 208–400 folds into the GMPS ATP-PPase domain; it reads WTPGNIVDDL…LGLPADMVYR (193 aa). 235–241 contributes to the ATP binding site; that stretch reads SGGVDSS.

In terms of assembly, homodimer.

The enzyme catalyses XMP + L-glutamine + ATP + H2O = GMP + L-glutamate + AMP + diphosphate + 2 H(+). The protein operates within purine metabolism; GMP biosynthesis; GMP from XMP (L-Gln route): step 1/1. Catalyzes the synthesis of GMP from XMP. In Alkalilimnicola ehrlichii (strain ATCC BAA-1101 / DSM 17681 / MLHE-1), this protein is GMP synthase [glutamine-hydrolyzing].